Consider the following 114-residue polypeptide: MNVRANRVSEQMKKELGDILNRKIKDPRLGFVTVTGVDVTGDLQEAKVFISILGTDKEKENTLLALAKAHGFIRSEIGRRIRLRKVPEMSFEIDNSIAYGNRIDELLRDLNSDQ.

It belongs to the RbfA family. In terms of assembly, monomer. Binds 30S ribosomal subunits, but not 50S ribosomal subunits or 70S ribosomes.

Its subcellular location is the cytoplasm. In terms of biological role, one of several proteins that assist in the late maturation steps of the functional core of the 30S ribosomal subunit. Associates with free 30S ribosomal subunits (but not with 30S subunits that are part of 70S ribosomes or polysomes). Required for efficient processing of 16S rRNA. May interact with the 5'-terminal helix region of 16S rRNA. The polypeptide is Ribosome-binding factor A (Listeria welshimeri serovar 6b (strain ATCC 35897 / DSM 20650 / CCUG 15529 / CIP 8149 / NCTC 11857 / SLCC 5334 / V8)).